Reading from the N-terminus, the 251-residue chain is Malonyl-[acyl-carrier protein] O-methyltransferase (251 aa).

Belongs to the methyltransferase superfamily.

The catalysed reaction is malonyl-[ACP] + S-adenosyl-L-methionine = malonyl-[ACP] methyl ester + S-adenosyl-L-homocysteine. The protein operates within cofactor biosynthesis; biotin biosynthesis. In terms of biological role, converts the free carboxyl group of a malonyl-thioester to its methyl ester by transfer of a methyl group from S-adenosyl-L-methionine (SAM). It allows to synthesize pimeloyl-ACP via the fatty acid synthetic pathway. The polypeptide is Malonyl-[acyl-carrier protein] O-methyltransferase (Pseudescherichia vulneris (Escherichia vulneris)).